Reading from the N-terminus, the 456-residue chain is UDP-glycosyltransferase 84B1 (456 aa).

UDP-alpha-D-glucose-binding positions include Ser-278, 332–334, 349–357, and 371–374; these read SPQ, HCGWNSTME, and WTDQ.

This sequence belongs to the UDP-glycosyltransferase family.

Functionally, possesses low quercetin 7-O-glucosyltransferase activity in vitro. The polypeptide is UDP-glycosyltransferase 84B1 (UGT84B1) (Arabidopsis thaliana (Mouse-ear cress)).